A 211-amino-acid chain; its full sequence is Rho-related GTP-binding protein RhoF (211 aa).

At M1 the chain carries N-acetylmethionine. 26–33 (GDGGCGKT) is a binding site for GTP. An Effector region motif is present at residues 48–56 (YAPSVFEKY). Residues 73 to 77 (DTAGQ) and 131 to 134 (CKTD) contribute to the GTP site. Residue C208 is modified to Cysteine methyl ester. A lipid anchor (S-geranylgeranyl cysteine) is attached at C208. Positions 209-211 (LLL) are cleaved as a propeptide — removed in mature form.

The protein belongs to the small GTPase superfamily. Rho family.

The protein localises to the cell membrane. The protein resides in the cytoplasm. Its subcellular location is the cytoskeleton. Plasma membrane-associated small GTPase which cycles between an active GTP-bound and an inactive GDP-bound state. Causes the formation of thin, actin-rich surface projections called filopodia. Functions cooperatively with CDC42 and Rac to generate additional structures, increasing the diversity of actin-based morphology. The sequence is that of Rho-related GTP-binding protein RhoF (Rhof) from Mus musculus (Mouse).